We begin with the raw amino-acid sequence, 605 residues long: MFKGLFKKTKYISLNPERKTELRSDQNDNKSNKPHIPDGLWEKCDSCKSIIYAEDLKKNYHICHECGHHFRIGAQERINQIIDEDTWVELDQNIISENPLEFEGYSEKVDKLQKKTELKEAILTGLGKINGQQAVIGAMDSRFLMGSMGSVVGEKVTRAIETGIDENLPVIMFTASGGARMQEGIYSLMQMAKTSAAISKLKDKGLPYIVVLTDPTTGGVTASFAMLGDIILAEPNALIGFAGKRVIEQTIKQKLPKEFQRAEFLLKHGFVDKVINRKEMRNKLSHILKLHKTKQPSRMLDGNDCSYYSSKDASKKASAKSVEEIRQQGKKLTPYDKVKLVRSKERPTSLDYIDNIFEGFIEFHGDRYFADDTSIVGGLAFLNGLPVTVIGQQKGRDLQENIYRNFGMPNPEGYRKAVRLMQQAEKFNRPIINFVDTSGAGCGKGAEERGQGEAIAQNLYTMSSLKVPIISLVIGEGGSGGALALTVADEVWMLENSVYSIVSPEGFASILWKDSSKAKEAADVMKITAQDLQELQIIDKILEEPYQDASKDGQAMSEIIKNNLLKTLDNLSKKETNDLLTKRYEKFRSIGRFIEKSNLDSSINQ.

Positions 1-269 are acetyl-coenzyme A carboxylase carboxyl transferase subunit beta; it reads MFKGLFKKTK…QRAEFLLKHG (269 aa). Residues 40-306 form the CoA carboxyltransferase N-terminal domain; the sequence is LWEKCDSCKS…SRMLDGNDCS (267 aa). Residues 40 to 570 are carboxyltransferase; that stretch reads LWEKCDSCKS…KNNLLKTLDN (531 aa). Positions 44, 47, 63, and 66 each coordinate Zn(2+). The C4-type zinc-finger motif lies at 44 to 66; it reads CDSCKSIIYAEDLKKNYHICHEC. Residues 270–593 are acetyl-coenzyme A carboxylase carboxyl transferase subunit alpha; sequence FVDKVINRKE…YEKFRSIGRF (324 aa). Residues 317 to 570 enclose the CoA carboxyltransferase C-terminal domain; it reads ASAKSVEEIR…KNNLLKTLDN (254 aa).

In the N-terminal section; belongs to the AccD/PCCB family. It in the C-terminal section; belongs to the AccA family. Acetyl-CoA carboxylase is a heterotetramer composed of biotin carboxyl carrier protein (AccB), biotin carboxylase (AccC) and two subunits of ACCase subunit beta/alpha. Zn(2+) is required as a cofactor.

The protein resides in the cytoplasm. The enzyme catalyses N(6)-carboxybiotinyl-L-lysyl-[protein] + acetyl-CoA = N(6)-biotinyl-L-lysyl-[protein] + malonyl-CoA. It participates in lipid metabolism; malonyl-CoA biosynthesis; malonyl-CoA from acetyl-CoA: step 1/1. In terms of biological role, component of the acetyl coenzyme A carboxylase (ACC) complex. Biotin carboxylase (BC) catalyzes the carboxylation of biotin on its carrier protein (BCCP) and then the CO(2) group is transferred by the transcarboxylase to acetyl-CoA to form malonyl-CoA. In Natranaerobius thermophilus (strain ATCC BAA-1301 / DSM 18059 / JW/NM-WN-LF), this protein is Acetyl-coenzyme A carboxylase carboxyl transferase subunits beta/alpha (accD).